Here is a 338-residue protein sequence, read N- to C-terminus: DNA-directed RNA polymerase subunit alpha (338 aa).

The segment at 1 to 226 is alpha N-terminal domain (alpha-NTD); it reads MLIAQRPTLT…ELFGLARELN (226 aa). The tract at residues 243-338 is alpha C-terminal domain (alpha-CTD); it reads LAADLALPIE…DADYADEQYN (96 aa).

It belongs to the RNA polymerase alpha chain family. In terms of assembly, homodimer. The RNAP catalytic core consists of 2 alpha, 1 beta, 1 beta' and 1 omega subunit. When a sigma factor is associated with the core the holoenzyme is formed, which can initiate transcription.

It catalyses the reaction RNA(n) + a ribonucleoside 5'-triphosphate = RNA(n+1) + diphosphate. Its function is as follows. DNA-dependent RNA polymerase catalyzes the transcription of DNA into RNA using the four ribonucleoside triphosphates as substrates. The chain is DNA-directed RNA polymerase subunit alpha from Beutenbergia cavernae (strain ATCC BAA-8 / DSM 12333 / CCUG 43141 / JCM 11478 / NBRC 16432 / NCIMB 13614 / HKI 0122).